The chain runs to 257 residues: 3-deoxy-manno-octulosonate cytidylyltransferase (257 aa).

This sequence belongs to the KdsB family.

It localises to the cytoplasm. It carries out the reaction 3-deoxy-alpha-D-manno-oct-2-ulosonate + CTP = CMP-3-deoxy-beta-D-manno-octulosonate + diphosphate. The protein operates within nucleotide-sugar biosynthesis; CMP-3-deoxy-D-manno-octulosonate biosynthesis; CMP-3-deoxy-D-manno-octulosonate from 3-deoxy-D-manno-octulosonate and CTP: step 1/1. It participates in bacterial outer membrane biogenesis; lipopolysaccharide biosynthesis. Activates KDO (a required 8-carbon sugar) for incorporation into bacterial lipopolysaccharide in Gram-negative bacteria. The protein is 3-deoxy-manno-octulosonate cytidylyltransferase of Stenotrophomonas maltophilia (strain R551-3).